Reading from the N-terminus, the 37-residue chain is Ice-structuring protein 3 (37 aa).

Belongs to the type-I AFP family.

Its function is as follows. Contributes to protect fish blood from freezing at subzero sea water temperatures. Lowers the blood freezing point. Binds to nascent ice crystals and prevents further growth. The sequence is that of Ice-structuring protein 3 from Pseudopleuronectes americanus (Winter flounder).